Reading from the N-terminus, the 156-residue chain is Putative pre-16S rRNA nuclease (156 aa).

The protein belongs to the YqgF nuclease family.

It is found in the cytoplasm. In terms of biological role, could be a nuclease involved in processing of the 5'-end of pre-16S rRNA. This Ehrlichia canis (strain Jake) protein is Putative pre-16S rRNA nuclease.